Consider the following 288-residue polypeptide: MSIITGKTKLLGIIGHPVEHSLSPVMQNAEIKRLGVDYIYIPFPVKPENLETALDGFATIGVMGFNATIPHKQAIIPLLSEVTTTAKLVGAVNTVWRTEIGWKGTNTDVIGFVTPLKALNRDWNTIKPIILGNGGAARAVVVGLAELGCRDICVVGRDKDKLGQFKQSWDTSELQASITVHSWDELSGMVSESQLIVNTTPIGMFPHTQNSPVDSNLWEKLPNNAIAYDLIYNPSPTQFLKDAKQQGLTVIDGLDMLVYQGAAALEIWLQQPVSATVMSEALKQSLFS.

Shikimate is bound by residues 21–23 (SLS) and Thr68. Lys72 acts as the Proton acceptor in catalysis. Shikimate contacts are provided by Asn93 and Asp108. Residues 132-136 (GNGGA) and Leu230 each bind NADP(+). Residue Tyr232 participates in shikimate binding. Gly253 is an NADP(+) binding site.

This sequence belongs to the shikimate dehydrogenase family. In terms of assembly, homodimer.

The enzyme catalyses shikimate + NADP(+) = 3-dehydroshikimate + NADPH + H(+). Its pathway is metabolic intermediate biosynthesis; chorismate biosynthesis; chorismate from D-erythrose 4-phosphate and phosphoenolpyruvate: step 4/7. In terms of biological role, involved in the biosynthesis of the chorismate, which leads to the biosynthesis of aromatic amino acids. Catalyzes the reversible NADPH linked reduction of 3-dehydroshikimate (DHSA) to yield shikimate (SA). The chain is Shikimate dehydrogenase (NADP(+)) from Crocosphaera subtropica (strain ATCC 51142 / BH68) (Cyanothece sp. (strain ATCC 51142)).